The following is a 442-amino-acid chain: 3-isopropylmalate dehydratase large subunit (442 aa).

[4Fe-4S] cluster contacts are provided by Cys347, Cys407, and Cys410.

Belongs to the aconitase/IPM isomerase family. LeuC type 1 subfamily. In terms of assembly, heterodimer of LeuC and LeuD. It depends on [4Fe-4S] cluster as a cofactor.

It catalyses the reaction (2R,3S)-3-isopropylmalate = (2S)-2-isopropylmalate. Its pathway is amino-acid biosynthesis; L-leucine biosynthesis; L-leucine from 3-methyl-2-oxobutanoate: step 2/4. Its function is as follows. Catalyzes the isomerization between 2-isopropylmalate and 3-isopropylmalate, via the formation of 2-isopropylmaleate. This Buchnera aphidicola subsp. Uroleucon helianthicola protein is 3-isopropylmalate dehydratase large subunit.